A 374-amino-acid polypeptide reads, in one-letter code: Peptide chain release factor 2 (374 aa).

Q250 bears the N5-methylglutamine mark.

Belongs to the prokaryotic/mitochondrial release factor family. Post-translationally, methylated by PrmC. Methylation increases the termination efficiency of RF2.

The protein resides in the cytoplasm. In terms of biological role, peptide chain release factor 2 directs the termination of translation in response to the peptide chain termination codons UGA and UAA. This Beutenbergia cavernae (strain ATCC BAA-8 / DSM 12333 / CCUG 43141 / JCM 11478 / NBRC 16432 / NCIMB 13614 / HKI 0122) protein is Peptide chain release factor 2.